A 476-amino-acid polypeptide reads, in one-letter code: MRVLHVCSELFPLLKTGGLADVIGALPAAQLAEGADVRIILPAFPDLRRGIPETVLVREIDTFAGRVALRYGHYRGIGIYLIDAPALYDRAGSPYHDASLYAYSDNYQRFALLGWMACELACGLDGYWRPEVVHAHDWHAGLTCAYLAARGRPARSVFTVHNLAYQGLFSAHHLSELQLPAEFFQIYGLEFYGQISYLKAGLFFADHVTTVSPTYAKEITQPAFGYGMEGLLQALAHQGRLTGILNGVDSDIWDPQSDTLLPTRYDAENLQAKAINKTHLQTAMGLQLTESKPIFAVVSRLTAQKGLDLVLEALPELLALGGQLVVLGSGDTTLQEAFLAAAAEHSGQVGVQIGYHEAFSHRIIAGSDVILVPSRFEPCGLTQLYGLKYGTLPLVRHTGGLADTVVDCALENLADGSASGFVFNECEAQALVKAIRRAFVLWSRPKHWRHVQRHAMRLDFGWQLAAVDYLSLYRRL.

Lys15 provides a ligand contact to ADP-alpha-D-glucose.

Belongs to the glycosyltransferase 1 family. Bacterial/plant glycogen synthase subfamily.

The catalysed reaction is [(1-&gt;4)-alpha-D-glucosyl](n) + ADP-alpha-D-glucose = [(1-&gt;4)-alpha-D-glucosyl](n+1) + ADP + H(+). Its pathway is glycan biosynthesis; glycogen biosynthesis. In terms of biological role, synthesizes alpha-1,4-glucan chains using ADP-glucose. The sequence is that of Glycogen synthase from Yersinia pseudotuberculosis serotype O:1b (strain IP 31758).